The sequence spans 434 residues: F-box only protein 15 (434 aa).

The F-box domain maps to 1 to 41; sequence MPSEILLKIFSYLDAVSLLCAGCVSRRFYHLANDNFIWIRI.

Directly interacts with SKP1 and CUL1.

In terms of biological role, substrate-recognition component of the SCF (SKP1-CUL1-F-box protein)-type E3 ubiquitin ligase complex. The chain is F-box only protein 15 (FBXO15) from Macaca fascicularis (Crab-eating macaque).